A 303-amino-acid polypeptide reads, in one-letter code: Acidic endochitinase WIN6.2B (303 aa).

Positions 1 to 21 (MSVWAFAFFSLFLSLSVRGSA) are cleaved as a signal peptide. Positions 22 to 62 (EQCGQQAGDALCPGGLCCSSYGWCGTTADYCGDGCQSQCDG) constitute a Chitin-binding type-1 domain. 4 disulfide bridges follow: Cys-24-Cys-39, Cys-33-Cys-45, Cys-38-Cys-52, and Cys-56-Cys-60. Residues 82–303 (DGYLSDIIPE…YGLLGLKDTM (222 aa)) form a chitinase region. Glu-150 functions as the Proton donor in the catalytic mechanism. Residues Cys-253 and Cys-286 are joined by a disulfide bond.

This sequence belongs to the glycosyl hydrolase 19 family. Chitinase class I subfamily.

It catalyses the reaction Random endo-hydrolysis of N-acetyl-beta-D-glucosaminide (1-&gt;4)-beta-linkages in chitin and chitodextrins.. In terms of biological role, defense against chitin-containing fungal pathogens. The polypeptide is Acidic endochitinase WIN6.2B (Populus trichocarpa (Western balsam poplar)).